We begin with the raw amino-acid sequence, 232 residues long: Ubiquinone biosynthesis O-methyltransferase (232 aa).

S-adenosyl-L-methionine-binding residues include R36, G55, D76, and L120.

This sequence belongs to the methyltransferase superfamily. UbiG/COQ3 family.

The catalysed reaction is a 3-demethylubiquinol + S-adenosyl-L-methionine = a ubiquinol + S-adenosyl-L-homocysteine + H(+). It carries out the reaction a 3-(all-trans-polyprenyl)benzene-1,2-diol + S-adenosyl-L-methionine = a 2-methoxy-6-(all-trans-polyprenyl)phenol + S-adenosyl-L-homocysteine + H(+). It participates in cofactor biosynthesis; ubiquinone biosynthesis. Its function is as follows. O-methyltransferase that catalyzes the 2 O-methylation steps in the ubiquinone biosynthetic pathway. This chain is Ubiquinone biosynthesis O-methyltransferase, found in Pseudomonas entomophila (strain L48).